Reading from the N-terminus, the 218-residue chain is ATP phosphoribosyltransferase (218 aa).

This sequence belongs to the ATP phosphoribosyltransferase family. Short subfamily. Heteromultimer composed of HisG and HisZ subunits.

The protein localises to the cytoplasm. It catalyses the reaction 1-(5-phospho-beta-D-ribosyl)-ATP + diphosphate = 5-phospho-alpha-D-ribose 1-diphosphate + ATP. It participates in amino-acid biosynthesis; L-histidine biosynthesis; L-histidine from 5-phospho-alpha-D-ribose 1-diphosphate: step 1/9. In terms of biological role, catalyzes the condensation of ATP and 5-phosphoribose 1-diphosphate to form N'-(5'-phosphoribosyl)-ATP (PR-ATP). Has a crucial role in the pathway because the rate of histidine biosynthesis seems to be controlled primarily by regulation of HisG enzymatic activity. The protein is ATP phosphoribosyltransferase (hisG) of Deinococcus radiodurans (strain ATCC 13939 / DSM 20539 / JCM 16871 / CCUG 27074 / LMG 4051 / NBRC 15346 / NCIMB 9279 / VKM B-1422 / R1).